Reading from the N-terminus, the 77-residue chain is Acyl carrier protein (77 aa).

A Carrier domain is found at 4–77 (SETFEKVKKI…TVQAAVDXIN (74 aa)). O-(pantetheine 4'-phosphoryl)serine is present on serine 40.

The protein belongs to the acyl carrier protein (ACP) family. 4'-phosphopantetheine is transferred from CoA to a specific serine of apo-ACP by AcpS. This modification is essential for activity because fatty acids are bound in thioester linkage to the sulfhydryl of the prosthetic group.

The protein localises to the cytoplasm. It participates in lipid metabolism; fatty acid biosynthesis. Carrier of the growing fatty acid chain in fatty acid biosynthesis. The sequence is that of Acyl carrier protein from Anabaena variabilis.